We begin with the raw amino-acid sequence, 50 residues long: C-C motif chemokine 5 (50 aa).

The protein belongs to the intercrine beta (chemokine CC) family.

It is found in the secreted. In terms of biological role, chemoattractant for blood monocytes, memory T-helper cells and eosinophils. Causes the release of histamine from basophils and activates eosinophils. May activate several chemokine receptors including CCR1, CCR3, CCR4 and CCR5. May also be an agonist of the G protein-coupled receptor GPR75. Together with GPR75, may play a role in neuron survival through activation of a downstream signaling pathway involving the PI3, Akt and MAP kinases. By activating GPR75 may also play a role in insulin secretion by islet cells. This Sus scrofa (Pig) protein is C-C motif chemokine 5 (CCL5).